A 441-amino-acid polypeptide reads, in one-letter code: S-adenosylmethionine synthase 1 (441 aa).

Glutamate 9 is a Mg(2+) binding site. Histidine 15 contacts ATP. Glutamate 43 is a binding site for K(+). L-methionine-binding residues include glutamate 56 and glutamine 99. Residues 167–169, 235–238, aspartate 246, 252–253, alanine 269, lysine 273, and lysine 277 contribute to the ATP site; these read DGK, SGRF, and RK. Aspartate 246 serves as a coordination point for L-methionine. Lysine 277 serves as a coordination point for L-methionine.

The protein belongs to the AdoMet synthase family. Homotetramer. Requires Mn(2+) as cofactor. The cofactor is Mg(2+). It depends on Co(2+) as a cofactor. K(+) serves as cofactor.

The protein resides in the cytoplasm. The enzyme catalyses L-methionine + ATP + H2O = S-adenosyl-L-methionine + phosphate + diphosphate. The protein operates within amino-acid biosynthesis; S-adenosyl-L-methionine biosynthesis; S-adenosyl-L-methionine from L-methionine: step 1/1. Catalyzes the formation of S-adenosylmethionine from methionine and ATP. The reaction comprises two steps that are both catalyzed by the same enzyme: formation of S-adenosylmethionine (AdoMet) and triphosphate, and subsequent hydrolysis of the triphosphate. This Daucus carota (Wild carrot) protein is S-adenosylmethionine synthase 1 (SAMS1).